The sequence spans 621 residues: Archaeal Lon protease (621 aa).

Over 1-117 (MNEEVREILG…YKEEAMKKAQ (117 aa)) the chain is Cytoplasmic. 54–61 (GSPGTGKS) lines the ATP pocket. The chain crosses the membrane as a helical span at residues 118–136 (ARNFLIFTLVFLVIGYTVL). The Extracellular segment spans residues 137 to 141 (TNPGN). Residues 142–160 (LIWGIIAAVLILMMSRYFI) traverse the membrane as a helical segment. Residues 161–621 (PREDRNVPKL…KFKELELAAV (461 aa)) are Cytoplasmic-facing. One can recognise a Lon proteolytic domain in the interval 423 to 602 (GYEVGRVNGL…NEVLEHVLED (180 aa)). Residues Ser-509 and Lys-552 contribute to the active site.

It belongs to the peptidase S16 family. Archaeal LonB subfamily. As to quaternary structure, homohexamer. Organized in a ring with a central cavity.

The protein localises to the cell membrane. Its function is as follows. ATP-dependent serine protease that mediates the selective degradation of mutant and abnormal proteins as well as certain short-lived regulatory proteins. Degrades polypeptides processively. This Archaeoglobus fulgidus (strain ATCC 49558 / DSM 4304 / JCM 9628 / NBRC 100126 / VC-16) protein is Archaeal Lon protease.